The sequence spans 472 residues: Siroheme synthase 2 (472 aa).

The interval 1-204 (MDYFPIFCQL…EDQVQVEQHV (204 aa)) is precorrin-2 dehydrogenase /sirohydrochlorin ferrochelatase. NAD(+) contacts are provided by residues 22–23 (EV) and 43–44 (CE). At Ser-128 the chain carries Phosphoserine. A uroporphyrinogen-III C-methyltransferase region spans residues 216 to 472 (GEVVLVGAGP…GMKEQVERVG (257 aa)). Pro-225 is an S-adenosyl-L-methionine binding site. Asp-248 acts as the Proton acceptor in catalysis. The active-site Proton donor is the Lys-270. Residues 301-303 (GGD), Ile-306, 331-332 (TA), Met-382, and Gly-411 contribute to the S-adenosyl-L-methionine site.

This sequence in the N-terminal section; belongs to the precorrin-2 dehydrogenase / sirohydrochlorin ferrochelatase family. The protein in the C-terminal section; belongs to the precorrin methyltransferase family.

The enzyme catalyses uroporphyrinogen III + 2 S-adenosyl-L-methionine = precorrin-2 + 2 S-adenosyl-L-homocysteine + H(+). It carries out the reaction precorrin-2 + NAD(+) = sirohydrochlorin + NADH + 2 H(+). The catalysed reaction is siroheme + 2 H(+) = sirohydrochlorin + Fe(2+). The protein operates within cofactor biosynthesis; adenosylcobalamin biosynthesis; precorrin-2 from uroporphyrinogen III: step 1/1. It functions in the pathway cofactor biosynthesis; adenosylcobalamin biosynthesis; sirohydrochlorin from precorrin-2: step 1/1. Its pathway is porphyrin-containing compound metabolism; siroheme biosynthesis; precorrin-2 from uroporphyrinogen III: step 1/1. It participates in porphyrin-containing compound metabolism; siroheme biosynthesis; siroheme from sirohydrochlorin: step 1/1. The protein operates within porphyrin-containing compound metabolism; siroheme biosynthesis; sirohydrochlorin from precorrin-2: step 1/1. Its function is as follows. Multifunctional enzyme that catalyzes the SAM-dependent methylations of uroporphyrinogen III at position C-2 and C-7 to form precorrin-2 via precorrin-1. Then it catalyzes the NAD-dependent ring dehydrogenation of precorrin-2 to yield sirohydrochlorin. Finally, it catalyzes the ferrochelation of sirohydrochlorin to yield siroheme. The protein is Siroheme synthase 2 of Yersinia enterocolitica serotype O:8 / biotype 1B (strain NCTC 13174 / 8081).